We begin with the raw amino-acid sequence, 341 residues long: Formimidoylglutamase (341 aa).

Residues histidine 133, aspartate 162, histidine 164, aspartate 166, cysteine 253, and aspartate 255 each contribute to the Mn(2+) site.

This sequence belongs to the arginase family. Requires Mn(2+) as cofactor.

The catalysed reaction is N-formimidoyl-L-glutamate + H2O = formamide + L-glutamate. It functions in the pathway amino-acid degradation; L-histidine degradation into L-glutamate; L-glutamate from N-formimidoyl-L-glutamate (hydrolase route): step 1/1. Functionally, catalyzes the conversion of N-formimidoyl-L-glutamate to L-glutamate and formamide. This is Formimidoylglutamase from Aromatoleum aromaticum (strain DSM 19018 / LMG 30748 / EbN1) (Azoarcus sp. (strain EbN1)).